A 215-amino-acid polypeptide reads, in one-letter code: Large ribosomal subunit protein uL3 (215 aa).

Residues 136–161 (GVSISHRSHGSTGQRQDPGKVFKGKK) are disordered. The residue at position 151 (Q151) is an N5-methylglutamine.

Belongs to the universal ribosomal protein uL3 family. Part of the 50S ribosomal subunit. Forms a cluster with proteins L14 and L19. Post-translationally, methylated by PrmB.

Functionally, one of the primary rRNA binding proteins, it binds directly near the 3'-end of the 23S rRNA, where it nucleates assembly of the 50S subunit. In Rickettsia akari (strain Hartford), this protein is Large ribosomal subunit protein uL3.